Here is a 120-residue protein sequence, read N- to C-terminus: V-type proton ATPase subunit F (120 aa).

It belongs to the V-ATPase F subunit family. In terms of assembly, V-ATPase is a heteromultimeric enzyme composed of a peripheral catalytic V1 complex (components A to H) attached to an integral membrane V0 proton pore complex (components: a, c, c', c'' and d).

Functionally, subunit of the peripheral V1 complex of vacuolar ATPase essential for assembly or catalytic function. V-ATPase is responsible for acidifying a variety of intracellular compartments in eukaryotic cells. The chain is V-type proton ATPase subunit F (vatF) from Dictyostelium discoideum (Social amoeba).